A 456-amino-acid chain; its full sequence is Perilipin-5 (456 aa).

The tract at residues 1–20 is disordered; sequence MSEDEAAQAPGPSLSEQDQQ. An interaction with LIPE region spans residues 1-108; the sequence is MSEDEAAQAP…KLEEKLPFLQ (108 aa). The tract at residues 1–173 is essential for lipid droplet targeting; that stretch reads MSEDEAAQAP…HFLPMTEEEL (173 aa). 3 positions are modified to phosphoserine: Ser-2, Ser-148, and Ser-324. The segment at 185–456 is interaction with PNPLA2 and ABHD5; sequence VGSVEEQRKH…KHTLMPELDF (272 aa). A disordered region spans residues 420 to 456; that stretch reads AWQAQHGEGTVLSGNIPEEEPEPPSRPKHTLMPELDF. A recruits mitochondria at the lipid droplet surface region spans residues 438–456; the sequence is EEPEPPSRPKHTLMPELDF.

Belongs to the perilipin family. As to quaternary structure, homooligomer. Interacts with PNPLA2; prevents interaction of PNPLA2 with ABHD5. Interacts with ABHD5; targets ABHD5 to lipid droplets and promotes interaction of ABHD5 with PNPLA2. Interacts with LIPE. Post-translationally, phosphorylated by PKA. Phosphorylated on serine in skeletal muscle at rest or upon lipolytic stimulation.

It localises to the lipid droplet. Its subcellular location is the cytoplasm. It is found in the mitochondrion. Its function is as follows. Lipid droplet-associated protein that maintains the balance between lipogenesis and lipolysis and also regulates fatty acid oxidation in oxidative tissues. Recruits mitochondria to the surface of lipid droplets and is involved in lipid droplet homeostasis by regulating both the storage of fatty acids in the form of triglycerides and the release of fatty acids for mitochondrial fatty acid oxidation. In lipid droplet triacylglycerol hydrolysis, plays a role as a scaffolding protein for three major key lipolytic players: ABHD5, PNPLA2 and LIPE. Reduces the triacylglycerol hydrolase activity of PNPLA2 by recruiting and sequestering PNPLA2 to lipid droplets. Phosphorylation by PKA enables lipolysis probably by promoting release of ABHD5 from the perilipin scaffold and by facilitating interaction of ABHD5 with PNPLA2. Also increases lipolysis through interaction with LIPE and upon PKA-mediated phosphorylation of LIPE. This Ovis aries (Sheep) protein is Perilipin-5 (Plin5).